A 132-amino-acid chain; its full sequence is Replication enhancer protein (132 aa).

It belongs to the geminiviridae replication enhancer protein family. Homooligomer. Interacts with the replication-associated protein (REP). Interacts with host proliferating cell nuclear antigen (PCNA). Interacts with host retinoblastoma-related protein 1 (RBR1), and may thereby deregulate the host cell cycle. Oligomerization and interaction with PCNA are necessary for optimal replication enhancement.

Functionally, increases viral DNA accumulation. Enhances infectivity and symptom expression. The polypeptide is Replication enhancer protein (Solanum lycopersicum (Tomato)).